Reading from the N-terminus, the 165-residue chain is Nucleotide-binding protein LBF_1338 (165 aa).

It belongs to the YajQ family.

Functionally, nucleotide-binding protein. The polypeptide is Nucleotide-binding protein LBF_1338 (Leptospira biflexa serovar Patoc (strain Patoc 1 / Ames)).